Here is a 492-residue protein sequence, read N- to C-terminus: Cysteine--tRNA ligase (492 aa).

Position 27 (C27) interacts with Zn(2+). Residues V29–H39 carry the 'HIGH' region motif. Zn(2+) is bound by residues C211, H236, and E240. Positions K268 to S272 match the 'KMSKS' region motif. K271 serves as a coordination point for ATP.

The protein belongs to the class-I aminoacyl-tRNA synthetase family. In terms of assembly, monomer. It depends on Zn(2+) as a cofactor.

Its subcellular location is the cytoplasm. It catalyses the reaction tRNA(Cys) + L-cysteine + ATP = L-cysteinyl-tRNA(Cys) + AMP + diphosphate. The chain is Cysteine--tRNA ligase from Prochlorococcus marinus subsp. pastoris (strain CCMP1986 / NIES-2087 / MED4).